A 1009-amino-acid polypeptide reads, in one-letter code: Type VII secretion system accessory factor EsaA (1009 aa).

A helical transmembrane segment spans residues 7 to 27 (IYALIVTLIIIIAIVSMIFFV). The segment covering 680 to 697 (TFAEEPQEPKIDKGKNDE) has biased composition (basic and acidic residues). Residues 680–707 (TFAEEPQEPKIDKGKNDEFNTMSSNLDK) form a disordered region. 5 helical membrane-spanning segments follow: residues 822 to 842 (ISPT…AYIF), 869 to 889 (VITS…VGLI), 903 to 923 (KFIL…TYLL), 928 to 948 (SIGM…MNNL), and 979 to 999 (IGLV…LNMF).

Belongs to the EsaA family. Homodimer. Interacts with EssB.

Its subcellular location is the cell membrane. Component of the type VII secretion system (Ess). Provides together with EssB and other components such as EssC and EssE a secretion plateform accross the cytoplasmic membrane in the host. This Staphylococcus aureus (strain USA300) protein is Type VII secretion system accessory factor EsaA.